Reading from the N-terminus, the 597-residue chain is Elongation factor 4 (597 aa).

Residues 2–184 (KNIRNFSIIA…SIVEHLPAPE (183 aa)) enclose the tr-type G domain. GTP contacts are provided by residues 14–19 (DHGKST) and 131–134 (NKID).

This sequence belongs to the TRAFAC class translation factor GTPase superfamily. Classic translation factor GTPase family. LepA subfamily.

It is found in the cell inner membrane. The enzyme catalyses GTP + H2O = GDP + phosphate + H(+). Required for accurate and efficient protein synthesis under certain stress conditions. May act as a fidelity factor of the translation reaction, by catalyzing a one-codon backward translocation of tRNAs on improperly translocated ribosomes. Back-translocation proceeds from a post-translocation (POST) complex to a pre-translocation (PRE) complex, thus giving elongation factor G a second chance to translocate the tRNAs correctly. Binds to ribosomes in a GTP-dependent manner. This chain is Elongation factor 4, found in Desulfotalea psychrophila (strain LSv54 / DSM 12343).